The primary structure comprises 327 residues: Quinone oxidoreductase (327 aa).

Belongs to the zinc-containing alcohol dehydrogenase family. Quinone oxidoreductase subfamily. In terms of assembly, homodimer.

The enzyme catalyses 2 a quinone + NADPH + H(+) = 2 a 1,4-benzosemiquinone + NADP(+). This is Quinone oxidoreductase (qor) from Salmonella typhimurium (strain LT2 / SGSC1412 / ATCC 700720).